Consider the following 423-residue polypeptide: Gamma-glutamyl phosphate reductase (423 aa).

Belongs to the gamma-glutamyl phosphate reductase family.

Its subcellular location is the cytoplasm. The catalysed reaction is L-glutamate 5-semialdehyde + phosphate + NADP(+) = L-glutamyl 5-phosphate + NADPH + H(+). It participates in amino-acid biosynthesis; L-proline biosynthesis; L-glutamate 5-semialdehyde from L-glutamate: step 2/2. In terms of biological role, catalyzes the NADPH-dependent reduction of L-glutamate 5-phosphate into L-glutamate 5-semialdehyde and phosphate. The product spontaneously undergoes cyclization to form 1-pyrroline-5-carboxylate. The polypeptide is Gamma-glutamyl phosphate reductase (Pseudomonas entomophila (strain L48)).